The following is a 474-amino-acid chain: Methylenetetrahydrofolate--tRNA-(uracil-5-)-methyltransferase TrmFO (474 aa).

9 to 14 lines the FAD pocket; the sequence is GGGLAG. Positions 425 to 451 are disordered; the sequence is PPLERMPRNETGKRLRGPEKAALKKRA. Over residues 429-451 the composition is skewed to basic and acidic residues; the sequence is RMPRNETGKRLRGPEKAALKKRA.

The protein belongs to the MnmG family. TrmFO subfamily. Requires FAD as cofactor.

The protein resides in the cytoplasm. It catalyses the reaction uridine(54) in tRNA + (6R)-5,10-methylene-5,6,7,8-tetrahydrofolate + NADH + H(+) = 5-methyluridine(54) in tRNA + (6S)-5,6,7,8-tetrahydrofolate + NAD(+). It carries out the reaction uridine(54) in tRNA + (6R)-5,10-methylene-5,6,7,8-tetrahydrofolate + NADPH + H(+) = 5-methyluridine(54) in tRNA + (6S)-5,6,7,8-tetrahydrofolate + NADP(+). Functionally, catalyzes the folate-dependent formation of 5-methyl-uridine at position 54 (M-5-U54) in all tRNAs. This is Methylenetetrahydrofolate--tRNA-(uracil-5-)-methyltransferase TrmFO from Methylorubrum populi (strain ATCC BAA-705 / NCIMB 13946 / BJ001) (Methylobacterium populi).